Reading from the N-terminus, the 351-residue chain is MSQIQTAPLPVMPSQAAAAADAAASRWKVADVAALYELPFNDLLFRAQQVHREHFDANTVQLSTLLSIKTGGCEEDCAYCPQSVHHETGLKAEKLMEVEEVLAAARVAKENGATRFCMGAAWRNPKDRHLEPIKDMIRGVKSMGLETCVTLGMLEAHQAQALREAGLDYYNHNLDTSPEFYGQIISTRTYQDRLDTLEHVRDAGINVCCGGIVGLGESRRERAGLIAQLANMEPYPESVPINNLVQVEGTPLTGTEALDPFEFVRTIAVARITMPRAMVRLSAGREQMDEALQAMCFLAGANSIFYGDQLLTTSNPQAEADRKLLARLGIRAEAAQQMPAERECSHGCEGH.

The 228-residue stretch at 58–285 (NTVQLSTLLS…RAMVRLSAGR (228 aa)) folds into the Radical SAM core domain. 3 residues coordinate [4Fe-4S] cluster: Cys73, Cys77, and Cys80. [2Fe-2S] cluster-binding residues include Cys117, Cys148, Cys208, and Arg280.

It belongs to the radical SAM superfamily. Biotin synthase family. In terms of assembly, homodimer. The cofactor is [4Fe-4S] cluster. It depends on [2Fe-2S] cluster as a cofactor.

It catalyses the reaction (4R,5S)-dethiobiotin + (sulfur carrier)-SH + 2 reduced [2Fe-2S]-[ferredoxin] + 2 S-adenosyl-L-methionine = (sulfur carrier)-H + biotin + 2 5'-deoxyadenosine + 2 L-methionine + 2 oxidized [2Fe-2S]-[ferredoxin]. It functions in the pathway cofactor biosynthesis; biotin biosynthesis; biotin from 7,8-diaminononanoate: step 2/2. Its function is as follows. Catalyzes the conversion of dethiobiotin (DTB) to biotin by the insertion of a sulfur atom into dethiobiotin via a radical-based mechanism. The polypeptide is Biotin synthase (Paraburkholderia phymatum (strain DSM 17167 / CIP 108236 / LMG 21445 / STM815) (Burkholderia phymatum)).